Here is a 137-residue protein sequence, read N- to C-terminus: Methylglyoxal synthase (137 aa).

An MGS-like domain is found at 1–137 (MKIALIAHDR…NIVHGRDRDA (137 aa)). Substrate is bound by residues His-8, Lys-12, 34 to 37 (TGTT), and 54 to 55 (SG). Asp-60 acts as the Proton donor/acceptor in catalysis. His-87 lines the substrate pocket.

Belongs to the methylglyoxal synthase family.

It carries out the reaction dihydroxyacetone phosphate = methylglyoxal + phosphate. Functionally, catalyzes the formation of methylglyoxal from dihydroxyacetone phosphate. The chain is Methylglyoxal synthase from Bacillus licheniformis (strain ATCC 14580 / DSM 13 / JCM 2505 / CCUG 7422 / NBRC 12200 / NCIMB 9375 / NCTC 10341 / NRRL NRS-1264 / Gibson 46).